Here is a 659-residue protein sequence, read N- to C-terminus: PAN2-PAN3 deadenylation complex subunit PAN3 (659 aa).

2 disordered regions span residues 1–26 (MASA…AREN) and 103–132 (PKAA…QENI). The C3H1-type zinc-finger motif lies at 26–55 (NAKDTLCRNVTIYGRCRYEDKGCAFNHDPL). Over residues 115–132 (SVASRSNTSTPNSRQENI) the composition is skewed to polar residues. The pseudokinase domain stretch occupies residues 262 to 522 (QTLPNTQLPA…NIDIFITGIS (261 aa)). ATP is bound by residues arginine 314, 363-370 (DYYPLSKT), and 422-423 (SK). Residues 523-561 (SQLMSTFDSALHLDDQLTSDLSRELENGRLVRLMTKLNL) are a coiled coil. The knob domain stretch occupies residues 562 to 659 (VNERPEYEHD…ALLKPARRMH (98 aa)).

The protein belongs to the protein kinase superfamily. PAN3 family. Homodimer. Forms a heterotrimer with a catalytic subunit pan2 to form the poly(A)-nuclease (PAN) deadenylation complex. Interacts (via PAM-2 motif) with poly(A)-binding protein pab1 (via PABC domain), conferring substrate specificity of the enzyme complex.

It is found in the cytoplasm. In terms of biological role, regulatory subunit of the poly(A)-nuclease (PAN) deadenylation complex, one of two cytoplasmic mRNA deadenylases involved in mRNA turnover. PAN specifically shortens poly(A) tails of RNA and the activity is stimulated by poly(A)-binding protein pab1. PAN deadenylation is followed by rapid degradation of the shortened mRNA tails by the CCR4-NOT complex. Deadenylated mRNAs are then degraded by two alternative mechanisms, namely exosome-mediated 3'-5' exonucleolytic degradation, or deadenylation-dependent mRNA decaping and subsequent 5'-3' exonucleolytic degradation by xrn1. May also be involved in post-transcriptional maturation of mRNA poly(A) tails. pan3 acts as a positive regulator for PAN activity, recruiting the catalytic subunit pan2 to mRNA via its interaction with RNA and with pab1. In Aspergillus clavatus (strain ATCC 1007 / CBS 513.65 / DSM 816 / NCTC 3887 / NRRL 1 / QM 1276 / 107), this protein is PAN2-PAN3 deadenylation complex subunit PAN3.